The chain runs to 434 residues: Histidinol dehydrogenase (434 aa).

Residues Tyr130, Gln191, and Asn214 each contribute to the NAD(+) site. Positions 237, 259, and 262 each coordinate substrate. Residues Gln259 and His262 each coordinate Zn(2+). Active-site proton acceptor residues include Glu328 and His329. Positions 329, 362, 416, and 421 each coordinate substrate. Asp362 contributes to the Zn(2+) binding site. Zn(2+) is bound at residue His421.

The protein belongs to the histidinol dehydrogenase family. Zn(2+) is required as a cofactor.

It catalyses the reaction L-histidinol + 2 NAD(+) + H2O = L-histidine + 2 NADH + 3 H(+). Its pathway is amino-acid biosynthesis; L-histidine biosynthesis; L-histidine from 5-phospho-alpha-D-ribose 1-diphosphate: step 9/9. Catalyzes the sequential NAD-dependent oxidations of L-histidinol to L-histidinaldehyde and then to L-histidine. This is Histidinol dehydrogenase from Rhodospirillum rubrum (strain ATCC 11170 / ATH 1.1.1 / DSM 467 / LMG 4362 / NCIMB 8255 / S1).